Consider the following 394-residue polypeptide: Stearoyl-[acyl-carrier-protein] 9-desaturase 1, chloroplastic (394 aa).

Residues Met1–Arg37 constitute a chloroplast transit peptide. The Fe cation site is built by Glu135, Glu173, His176, Glu226, Glu259, and His262.

This sequence belongs to the fatty acid desaturase type 2 family. Homodimer. It depends on Fe(2+) as a cofactor. Ubiquitously expressed.

The protein resides in the plastid. It localises to the chloroplast. The catalysed reaction is octadecanoyl-[ACP] + 2 reduced [2Fe-2S]-[ferredoxin] + O2 + 2 H(+) = (9Z)-octadecenoyl-[ACP] + 2 oxidized [2Fe-2S]-[ferredoxin] + 2 H2O. It participates in lipid metabolism; fatty acid metabolism. Its function is as follows. Converts stearoyl-ACP to oleoyl-ACP by introduction of a cis double bond between carbons 9 and 10 of the acyl chain. In Arabidopsis thaliana (Mouse-ear cress), this protein is Stearoyl-[acyl-carrier-protein] 9-desaturase 1, chloroplastic (S-ACP-DES1).